Here is a 360-residue protein sequence, read N- to C-terminus: Phospho-N-acetylmuramoyl-pentapeptide-transferase (360 aa).

The next 10 membrane-spanning stretches (helical) occupy residues 26-46, 72-92, 94-114, 132-152, 168-188, 199-219, 236-256, 263-283, 288-308, and 338-358; these read AIVS…RMIA, PTMG…LWAY, SNPY…IGFV, WKYF…YLAG, VMPQ…VGTG, GLAI…AWAT, AGEL…FLWF, VFMG…IAVL, FLLV…ILQV, and VIVR…ATLK.

It belongs to the glycosyltransferase 4 family. MraY subfamily. It depends on Mg(2+) as a cofactor.

It is found in the cell inner membrane. The enzyme catalyses UDP-N-acetyl-alpha-D-muramoyl-L-alanyl-gamma-D-glutamyl-meso-2,6-diaminopimeloyl-D-alanyl-D-alanine + di-trans,octa-cis-undecaprenyl phosphate = di-trans,octa-cis-undecaprenyl diphospho-N-acetyl-alpha-D-muramoyl-L-alanyl-D-glutamyl-meso-2,6-diaminopimeloyl-D-alanyl-D-alanine + UMP. Its pathway is cell wall biogenesis; peptidoglycan biosynthesis. Functionally, catalyzes the initial step of the lipid cycle reactions in the biosynthesis of the cell wall peptidoglycan: transfers peptidoglycan precursor phospho-MurNAc-pentapeptide from UDP-MurNAc-pentapeptide onto the lipid carrier undecaprenyl phosphate, yielding undecaprenyl-pyrophosphoryl-MurNAc-pentapeptide, known as lipid I. In Klebsiella pneumoniae subsp. pneumoniae (strain ATCC 700721 / MGH 78578), this protein is Phospho-N-acetylmuramoyl-pentapeptide-transferase.